Reading from the N-terminus, the 448-residue chain is Allantoinase (448 aa).

6 residues coordinate Zn(2+): histidine 60, histidine 62, lysine 147, histidine 183, histidine 239, and aspartate 312. Lysine 147 carries the N6-carboxylysine modification.

This sequence belongs to the metallo-dependent hydrolases superfamily. Allantoinase family. In terms of assembly, homotetramer. Requires Zn(2+) as cofactor. Carboxylation allows a single lysine to coordinate two zinc ions.

It carries out the reaction (S)-allantoin + H2O = allantoate + H(+). The protein operates within nitrogen metabolism; (S)-allantoin degradation; allantoate from (S)-allantoin: step 1/1. In terms of biological role, catalyzes the conversion of allantoin (5-ureidohydantoin) to allantoic acid by hydrolytic cleavage of the five-member hydantoin ring. The sequence is that of Allantoinase from Deinococcus radiodurans (strain ATCC 13939 / DSM 20539 / JCM 16871 / CCUG 27074 / LMG 4051 / NBRC 15346 / NCIMB 9279 / VKM B-1422 / R1).